The primary structure comprises 1123 residues: Leucine-rich repeat receptor-like protein kinase PEPR1 (1123 aa).

Positions 1-28 (MKNLGGLFKILLLFFCLFLSTHIISVSC) are cleaved as a signal peptide. At 29 to 769 (LNSDGLTLLS…SRKSGLSTWQ (741 aa)) the chain is on the extracellular side. The stretch at 31 to 53 (SDGLTLLSLLKHLDRVPPQVTST) is one LRR 1 repeat. Asn-57, Asn-81, Asn-110, and Asn-121 each carry an N-linked (GlcNAc...) asparagine glycan. 7 LRR repeats span residues 74 to 98 (SKNVASLNFTRSRVSGQLGPEIGEL), 99 to 122 (KSLQILDLSTNNFSGTIPSTLGNC), 124 to 145 (KLATLDLSENGFSDKIPDTLDS), 146 to 170 (LKRLEVLYLYINFLTGELPESLFRI), 171 to 194 (PKLQVLYLDYNNLTGPIPQSIGDA), 196 to 218 (ELVELSMYANQFSGNIPESIGNS), and 219 to 243 (SSLQILYLHRNKLVGSLPESLNLLG). N-linked (GlcNAc...) asparagine glycosylation is found at Asn-182 and Asn-217. N-linked (GlcNAc...) asparagine glycans are attached at residues Asn-244, Asn-252, Asn-289, Asn-302, Asn-316, Asn-321, and Asn-337. LRR repeat units follow at residues 245–266 (LTTLFVGNNSLQGPVRFGSPNC), 267–290 (KNLLTLDLSYNEFEGGVPPALGNC), 292–314 (SLDALVIVSGNLSGTIPSSLGML), 315–338 (KNLTILNLSENRLSGSIPAELGNC), 340–362 (SLNLLKLNDNQLVGGIPSALGKL), 363–386 (RKLESLELFENRFSGEIPIEIWKS), 388–410 (SLTQLLVYQNNLTGELPVEMTEM), 412–434 (KLKIATLFNNSFYGAIPPGLGVN), 435–458 (SSLEEVDFIGNKLTGEIPPNLCHG), 459–482 (RKLRILNLGSNLLHGTIPASIGHC), 484–505 (TIRRFILRENNLSGLLPEFSQD), 506–529 (HSLSFLDFNSNNFEGPIPGSLGSC), 530–553 (KNLSSINLSRNRFTGQIPPQLGNL), 554–577 (QNLGYMNLSRNLLEGSLPAQLSNC), 579–600 (SLERFDVGFNSLNGSVPSNFSN), 601–625 (WKGLTTLVLSENRFSGGIPQFLPEL), 626–650 (KKLSTLQIARNAFGGEIPSSIGLIE), 652–674 (LIYDLDLSGNGLTGEIPAKLGDL), 675–696 (IKLTRLNISNNNLTGSLSVLKG), and 697–721 (LTSLLHVDVSNNQFTGPIPDNLEGQ). N-linked (GlcNAc...) asparagine glycosylation is found at Asn-398, Asn-420, and Asn-434. Residue Asn-494 is glycosylated (N-linked (GlcNAc...) asparagine). N-linked (GlcNAc...) asparagine glycosylation is found at Asn-531, Asn-536, Asn-560, Asn-591, and Asn-597. Asn-681 and Asn-686 each carry an N-linked (GlcNAc...) asparagine glycan. Asn-745 carries an N-linked (GlcNAc...) asparagine glycan. Residues 770 to 790 (IVLIAVLSSLLVLVVVLALVF) form a helical membrane-spanning segment. Topologically, residues 791-1123 (ICLRRRKGRP…ARSCSSDSVR (333 aa)) are cytoplasmic. Thr-824 carries the post-translational modification Phosphothreonine. Positions 827–1115 (LNEKYTIGRG…LLEDVKHLAR (289 aa)) constitute a Protein kinase domain. ATP is bound by residues 833–841 (IGRGAHGIV) and Lys-855. Tyr-901 and Tyr-941 each carry phosphotyrosine. The Proton acceptor role is filled by Asp-954. Position 995 is a phosphotyrosine (Tyr-995).

Belongs to the protein kinase superfamily. Ser/Thr protein kinase family. As to quaternary structure, interacts with PEP1 and BAK1. Interacts with BIK1 and PBL1. In terms of processing, N-glycosylated.

Its subcellular location is the cell membrane. The catalysed reaction is L-seryl-[protein] + ATP = O-phospho-L-seryl-[protein] + ADP + H(+). It carries out the reaction L-threonyl-[protein] + ATP = O-phospho-L-threonyl-[protein] + ADP + H(+). Its function is as follows. Acts as a receptor for PEP defense peptides. Unlike typical immune receptors, senses an endogenous elicitor that potentiates pathogen-associated molecular pattern (PAMP)-inducible plant responses. Involved in PAMP-triggered immunity (PTI) signaling. Interacts with and phosphorylates the kinase BIK1, a central rate-limiting kinase in PTI signaling. The sequence is that of Leucine-rich repeat receptor-like protein kinase PEPR1 (PEPR1) from Arabidopsis thaliana (Mouse-ear cress).